Consider the following 418-residue polypeptide: Zinc finger protein 566 (418 aa).

The region spanning 6 to 77 is the KRAB domain; that stretch reads VMFSDVSVDF…DRELTRGQWP (72 aa). The segment at 169-193 adopts a C2H2-type 1; degenerate zinc-finger fold; sequence KFCASKEYRKTFRHGSQFATHEIIH. C2H2-type zinc fingers lie at residues 199 to 221, 227 to 249, 255 to 277, 283 to 305, 311 to 333, 339 to 361, and 367 to 389; these read YECKECGKSFRHPSRLTHHQKIH, FECKECGKTFICGSDLTRHHRIH, YECKECGKAFSSGSNFTRHQRIH, YECKECGKAFSSGSNFTQHQRIH, YECKECGNAFSQSSQLIKHQRIH, YECKECEKAFRSGSDLTRHQRIH, and YECKICGKAYSQSSQLISHHRIH. Glycyl lysine isopeptide (Lys-Gly) (interchain with G-Cter in SUMO2) cross-links involve residues lysine 314 and lysine 328.

Belongs to the krueppel C2H2-type zinc-finger protein family.

The protein resides in the nucleus. In terms of biological role, may be involved in transcriptional regulation. The chain is Zinc finger protein 566 (ZNF566) from Pan troglodytes (Chimpanzee).